The chain runs to 546 residues: Cytochrome P450 monooxygenase fumoB (546 aa).

Residues 13 to 33 (LGYYEKLAGILGIIGLVLLFW) traverse the membrane as a helical segment. N147 carries N-linked (GlcNAc...) asparagine glycosylation. C488 contacts heme.

Belongs to the cytochrome P450 family. Requires heme as cofactor.

The protein localises to the membrane. The protein operates within secondary metabolite biosynthesis. Cytochrome P450 monooxygenase; part of the gene cluster that mediates the biosynthesis of fumosorinone, a 2-pyridone alkaloid that acts as an inhibitor of protein tyrosine phosphatase 1B which is implicated asa negative regulator of insulin receptor signaling and a potential drug target for the treatment of type II diabetes and other associated metabolic syndromes. The polyketide-amino acid backbone of fumosorinone is first assembled by the PKS-NRPS hybrid fumoS. The PKS modules condense one acetyl-CoA starter unit with 7 malonyl-CoA units, programmed C-methylations occurring after the first 3 and the sixth extensions, and cycles of full reduction occurring after the first 2 extensions. Because fumoS lacks a designated enoyl reductase (ER) domain, the required activity is provided the enoyl reductase fumoC. Upon formation of the polyketide backbone on the thiotemplate, the polyketide is transferred to the NRPS module and linked to tyrosine to produce the acyltetramic acid intermediate called prefumosorinone A. The cytochrome P450 monooxygenase fumoA then probably catalyzes an unprecedented oxidative ring expansion of prefumosorinone A to form prefumosorinone B which contains the 2-pyridone core of fumosorinone. The cytochrome P450 monooxygenase fumoB might hydroxylate the nitrogen of prefumosorinone B, but not the acyltetramic acid prefumosorinone A, to form fumosorinone. This is Cytochrome P450 monooxygenase fumoB from Cordyceps fumosorosea (strain ARSEF 2679) (Isaria fumosorosea).